Here is a 415-residue protein sequence, read N- to C-terminus: Tyrosine--tRNA ligase (415 aa).

The short motif at P54–H63 is the 'HIGH' region element. The short motif at K248–S252 is the 'KMSKS' region element. K251 is an ATP binding site. The 65-residue stretch at A351–R415 folds into the S4 RNA-binding domain.

It belongs to the class-I aminoacyl-tRNA synthetase family. TyrS type 2 subfamily. As to quaternary structure, homodimer.

It is found in the cytoplasm. The enzyme catalyses tRNA(Tyr) + L-tyrosine + ATP = L-tyrosyl-tRNA(Tyr) + AMP + diphosphate + H(+). Catalyzes the attachment of tyrosine to tRNA(Tyr) in a two-step reaction: tyrosine is first activated by ATP to form Tyr-AMP and then transferred to the acceptor end of tRNA(Tyr). This is Tyrosine--tRNA ligase from Prochlorococcus marinus (strain MIT 9313).